The primary structure comprises 553 residues: Arginine--tRNA ligase (553 aa).

The short motif at 132-140 (PTGDLHIGH) is the 'HIGH' region element.

It belongs to the class-I aminoacyl-tRNA synthetase family. Monomer.

It localises to the cytoplasm. The catalysed reaction is tRNA(Arg) + L-arginine + ATP = L-arginyl-tRNA(Arg) + AMP + diphosphate. This is Arginine--tRNA ligase from Staphylococcus aureus (strain Mu50 / ATCC 700699).